Here is a 193-residue protein sequence, read N- to C-terminus: Large ribosomal subunit protein uL18 (193 aa).

This sequence belongs to the universal ribosomal protein uL18 family. Part of the 50S ribosomal subunit. Contacts the 5S and 23S rRNAs.

Functionally, this is one of the proteins that bind and probably mediate the attachment of the 5S RNA into the large ribosomal subunit, where it forms part of the central protuberance. The sequence is that of Large ribosomal subunit protein uL18 from Methanococcus maripaludis (strain DSM 14266 / JCM 13030 / NBRC 101832 / S2 / LL).